Reading from the N-terminus, the 434-residue chain is UDP-N-acetylglucosamine 1-carboxyvinyltransferase (434 aa).

22–23 (KN) provides a ligand contact to phosphoenolpyruvate. Arginine 97 serves as a coordination point for UDP-N-acetyl-alpha-D-glucosamine. Residue aspartate 121 is the Proton donor of the active site. UDP-N-acetyl-alpha-D-glucosamine is bound by residues aspartate 319 and methionine 341.

Belongs to the EPSP synthase family. MurA subfamily.

It localises to the cytoplasm. It catalyses the reaction phosphoenolpyruvate + UDP-N-acetyl-alpha-D-glucosamine = UDP-N-acetyl-3-O-(1-carboxyvinyl)-alpha-D-glucosamine + phosphate. It functions in the pathway cell wall biogenesis; peptidoglycan biosynthesis. In terms of biological role, cell wall formation. Adds enolpyruvyl to UDP-N-acetylglucosamine. The polypeptide is UDP-N-acetylglucosamine 1-carboxyvinyltransferase (Porphyromonas gingivalis (strain ATCC BAA-308 / W83)).